The sequence spans 260 residues: Global transcriptional regulator CodY (260 aa).

The tract at residues Met1 to Leu159 is GAF domain. The H-T-H motif DNA-binding region spans Ala207 to Arg226.

This sequence belongs to the CodY family.

It localises to the cytoplasm. DNA-binding global transcriptional regulator which is involved in the adaptive response to starvation and acts by directly or indirectly controlling the expression of numerous genes in response to nutrient availability. During rapid exponential growth, CodY is highly active and represses genes whose products allow adaptation to nutrient depletion. This is Global transcriptional regulator CodY from Streptococcus pyogenes serotype M1.